The sequence spans 215 residues: Large ribosomal subunit protein uL4 (215 aa).

The disordered stretch occupies residues 43 to 101 (HQRQGTSKTKERGEVRGSGRKLYRQKGTGNARVGDAQSPIRRGGGRAHGARPRDYAHDL). A compositionally biased stretch (basic and acidic residues) spans 50 to 59 (KTKERGEVRG).

It belongs to the universal ribosomal protein uL4 family. As to quaternary structure, part of the 50S ribosomal subunit.

Its function is as follows. One of the primary rRNA binding proteins, this protein initially binds near the 5'-end of the 23S rRNA. It is important during the early stages of 50S assembly. It makes multiple contacts with different domains of the 23S rRNA in the assembled 50S subunit and ribosome. Functionally, forms part of the polypeptide exit tunnel. The sequence is that of Large ribosomal subunit protein uL4 from Salinibacter ruber (strain DSM 13855 / M31).